The sequence spans 279 residues: Probable endonuclease 4 (279 aa).

Zn(2+)-binding residues include H69, H109, E145, D179, H182, H216, D229, H231, and E261.

The protein belongs to the AP endonuclease 2 family. Requires Zn(2+) as cofactor.

The catalysed reaction is Endonucleolytic cleavage to 5'-phosphooligonucleotide end-products.. Its function is as follows. Endonuclease IV plays a role in DNA repair. It cleaves phosphodiester bonds at apurinic or apyrimidinic (AP) sites, generating a 3'-hydroxyl group and a 5'-terminal sugar phosphate. The protein is Probable endonuclease 4 of Desulforapulum autotrophicum (strain ATCC 43914 / DSM 3382 / VKM B-1955 / HRM2) (Desulfobacterium autotrophicum).